Here is a 191-residue protein sequence, read N- to C-terminus: Probable nicotinate-nucleotide adenylyltransferase (191 aa).

Belongs to the NadD family.

The enzyme catalyses nicotinate beta-D-ribonucleotide + ATP + H(+) = deamido-NAD(+) + diphosphate. It functions in the pathway cofactor biosynthesis; NAD(+) biosynthesis; deamido-NAD(+) from nicotinate D-ribonucleotide: step 1/1. Functionally, catalyzes the reversible adenylation of nicotinate mononucleotide (NaMN) to nicotinic acid adenine dinucleotide (NaAD). In Oceanobacillus iheyensis (strain DSM 14371 / CIP 107618 / JCM 11309 / KCTC 3954 / HTE831), this protein is Probable nicotinate-nucleotide adenylyltransferase.